The chain runs to 434 residues: 4-hydroxy-3-methylbut-2-en-1-yl diphosphate synthase (flavodoxin) (434 aa).

The span at 1–15 (MQSEAQSPRSSQICS) shows a compositional bias: polar residues. Residues 1–24 (MQSEAQSPRSSQICSTEPVFGGHQ) form a disordered region. [4Fe-4S] cluster is bound by residues Cys322, Cys325, Cys368, and Glu375.

The protein belongs to the IspG family. Requires [4Fe-4S] cluster as cofactor.

The catalysed reaction is (2E)-4-hydroxy-3-methylbut-2-enyl diphosphate + oxidized [flavodoxin] + H2O + 2 H(+) = 2-C-methyl-D-erythritol 2,4-cyclic diphosphate + reduced [flavodoxin]. Its pathway is isoprenoid biosynthesis; isopentenyl diphosphate biosynthesis via DXP pathway; isopentenyl diphosphate from 1-deoxy-D-xylulose 5-phosphate: step 5/6. Converts 2C-methyl-D-erythritol 2,4-cyclodiphosphate (ME-2,4cPP) into 1-hydroxy-2-methyl-2-(E)-butenyl 4-diphosphate. This Burkholderia cenocepacia (strain ATCC BAA-245 / DSM 16553 / LMG 16656 / NCTC 13227 / J2315 / CF5610) (Burkholderia cepacia (strain J2315)) protein is 4-hydroxy-3-methylbut-2-en-1-yl diphosphate synthase (flavodoxin).